Consider the following 885-residue polypeptide: MTGPLTTAEIREKFLSFFESKGHLRLPSHSLIAPDPTTLFTVAGMQPFKPQFMGAPAKFPGYGENRRVTTAQKCIRVGDIENVGRTRRHLSLFEMMGNFSFGDYFKREAILWAWEFLTSPEWLGMDPARMYVTIYEDDNEAFGYWTQDVGLPEDHIHRFGADENFWPADAPAKGPNGPCGPCSEIYYDRGPHYGDDTWADYAQTRESARFLEVWNLVFPQYDRQDGGVLADLPFKNIDTGMGLERVASVVQDVPDFYSNDVFRPLVEKVAELSGKPYEGEVSVSHRVVAEHIRSVAMTIADGVALSNTGRGYVIRKILRRASRHAYLLGLHEPTLYRLVPLVVQAMGGAYPELVTEEARVTAAIRAEEERFLKTLESGMQRLSGLLEGMERGAVLPGEEAFLLYDTYGFPLDLTKEIAEEYGISVNEAEYAESLERAQETARAASKYGKSELFGGSQEALEGLPPTQFVGYDELEAQGEVLALVGAGERLDHLMAGSEATVVLSRTPFYAEGGGEVGDTGVLEWEGGRGLVRDTRKTPAGIWLHDVLVEEGELTPGVTVRGVVSSERQAIQRHHTATHLLHAALRAVLGPGVRQAGSLVAPERLRFDFTHGAALTADELGQVERLVSRWVTANFPVTWREMPLAEAKAAGATALFGEKYGDTVRVVRVEGGIPFGDATVTSMELCGGAHVTRTGDIGAFVIVSDENVAAGVRRIEALAGEAATAWVRAQLNNVHRVSGLLNTSPDTLETRVIGLQSQLRAAQQETAQARRQLAEAQMGGASTQQVRELGGFKVAVLRLSGIEGGELRGAADKLLDQSGADLAVIASDKGLVVKASKTAVARGAHAGQLIGKLAAAGGGKGGGRPDMAQAGIGNPEAALAALDTAF.

4 residues coordinate Zn(2+): H574, H578, C685, and H689.

It belongs to the class-II aminoacyl-tRNA synthetase family. Requires Zn(2+) as cofactor.

It is found in the cytoplasm. It catalyses the reaction tRNA(Ala) + L-alanine + ATP = L-alanyl-tRNA(Ala) + AMP + diphosphate. In terms of biological role, catalyzes the attachment of alanine to tRNA(Ala) in a two-step reaction: alanine is first activated by ATP to form Ala-AMP and then transferred to the acceptor end of tRNA(Ala). Also edits incorrectly charged Ser-tRNA(Ala) and Gly-tRNA(Ala) via its editing domain. The chain is Alanine--tRNA ligase from Deinococcus geothermalis (strain DSM 11300 / CIP 105573 / AG-3a).